Reading from the N-terminus, the 459-residue chain is Vasoactive intestinal polypeptide receptor 1 (459 aa).

The first 30 residues, 1 to 30 (MRPPSPPHVRWLCVLAGALACALRPAGSQA), serve as a signal peptide directing secretion. The Extracellular portion of the chain corresponds to 31–142 (ASPQHECEYL…EQQQTKFYNT (112 aa)). 5 cysteine pairs are disulfide-bonded: cysteine 37/cysteine 209, cysteine 50/cysteine 72, cysteine 63/cysteine 105, cysteine 86/cysteine 122, and cysteine 216/cysteine 286. Asparagine 58, asparagine 69, and asparagine 100 each carry an N-linked (GlcNAc...) asparagine glycan. Residues 143–167 (VKTGYTIGYSLSLASLLVAMAILSL) traverse the membrane as a helical segment. The Cytoplasmic segment spans residues 168 to 175 (FRKLHCTR). Residues 176–197 (NYIHMHLFMSFILRATAVFIKD) traverse the membrane as a helical segment. The Extracellular segment spans residues 198–217 (MALFNSGEIDHCSEASVGCK). The chain crosses the membrane as a helical span at residues 218-242 (AAVVFFQYCVMANFFWLLVEGLYLY). Topologically, residues 243–255 (TLLAVSFFSERKY) are cytoplasmic. Residues 256 to 277 (FWGYILIGWGVPSVFITIWTVV) traverse the membrane as a helical segment. Residues 278–293 (RIYFEDFGCWDTIINS) lie on the Extracellular side of the membrane. An N-linked (GlcNAc...) asparagine glycan is attached at asparagine 292. The helical transmembrane segment at 294-318 (SLWWIIKAPILLSILVNFVLFICII) threads the bilayer. The Cytoplasmic segment spans residues 319 to 340 (RILVQKLRPPDIGKNDSSPYSR). Residues 341–361 (LAKSTLLLIPLFGIHYVMFAF) traverse the membrane as a helical segment. Residues 362–369 (FPDNFKAQ) lie on the Extracellular side of the membrane. Residues 370–393 (VKMVFELVVGSFQGFVVAILYCFL) form a helical membrane-spanning segment. Residues 394–459 (NGEVQAELRR…SSFQAEVSLV (66 aa)) lie on the Cytoplasmic side of the membrane.

It belongs to the G-protein coupled receptor 2 family. As to quaternary structure, interacts with ADCYAP1/PACAP; activated by both PACAP27 and PACAP38 neuropeptides. Interacts with VIP; the interaction results in VIPR1 activation. In liver, lung, intestines, thymus and brain (mostly in the cerebral cortex and hippocampus).

Its subcellular location is the cell membrane. G protein-coupled receptor activated by the neuropeptides vasoactive intestinal peptide (VIP) and pituitary adenylate cyclase-activating polypeptide (ADCYAP1/PACAP). Binds VIP and both PACAP27 and PACAP38 bioactive peptides with the following order of ligand affinity VIP = PACAP27 &gt; PACAP38. Ligand binding causes a conformation change that triggers signaling via guanine nucleotide-binding proteins (G proteins) and modulates the activity of downstream effectors. Activates cAMP-dependent pathway. This is Vasoactive intestinal polypeptide receptor 1 from Rattus norvegicus (Rat).